The following is a 165-amino-acid chain: DASH complex subunit SPC19 (165 aa).

A coiled-coil region spans residues 74-104 (GDKLRKSMGRMQRELDTLQQTYELNDLRLKK). Phosphoserine occurs at positions 107 and 116. Residues 132–165 (VMMASSTNEELEELKKLKEKKKQLENKLEILKQK) are a coiled coil.

It belongs to the DASH complex SPC19 family. Component of the DASH complex consisting of ASK1, DAD1, DAD2, DAD3, DAD4, DAM1, DUO1, HSK3, SPC19 and SPC34, with a stoichiometry of one copy of each subunit per complex. Multiple DASH complexes oligomerize to form a ring that encircles spindle microtubules and organizes the rod-like NDC80 complexes of the outer kinetochore. DASH complex oligomerization strengthens microtubule attachments. On cytoplasmic microtubules, DASH complexes appear to form patches instead of rings.

The protein resides in the nucleus. It localises to the cytoplasm. The protein localises to the cytoskeleton. It is found in the spindle. Its subcellular location is the chromosome. The protein resides in the centromere. It localises to the kinetochore. In terms of biological role, component of the DASH complex that connects microtubules with kinetochores and couples microtubule depolymerisation to chromosome movement; it is involved in retrieving kinetochores to the spindle poles before their re-orientation on the spindle in early mitosis and allows microtubule depolymerization to pull chromosomes apart and resist detachment during anaphase. Kinetochores, consisting of a centromere-associated inner segment and a microtubule-contacting outer segment, play a crucial role in chromosome segregation by mediating the physical connection between centromeric DNA and microtubules. Kinetochores also serve as an input point for the spindle assembly checkpoint, which delays anaphase until all chromosomes have bioriented on the mitotic spindle. During spindle-kinetochore attachment, kinetochores first attach to the lateral surface of spindle microtubules, which supports the congression of chromosomes toward the middle of the dividing cell; they then slide along towards the spindle pole, a process independent of the DASH complex but requiring the NDC80 complex. When the end of a disassembling microtubule reaches the laterally attached kinetochore, the DASH complex together with the NDC80 complex and STU2 convert lateral attachment to end-on capture to produce a structure that can track with microtubule shortening and sustain attachment when tension is applied across sister kinetochores upon their biorientation. Microtubule depolymerization proceeds by protofilament splaying and induces the kinetochore-attached DASH complex to slide longitudinally, thereby helping to transduce depolymerization energy into pulling forces to disjoin chromatids. Incorrect microtubule attachments are corrected by releasing microubules from the kinetochore through phosphorylation by IPL1 of kinetochore components. Links the microtubule cytoskeleton to chromosomes during interphase. Also contributes to the poleward transport of kinetochores on microtubules following centromeric DNA replication in S-phase. In Saccharomyces cerevisiae (strain ATCC 204508 / S288c) (Baker's yeast), this protein is DASH complex subunit SPC19 (SPC19).